Here is a 379-residue protein sequence, read N- to C-terminus: Caffeyl-CoA reductase-Etf complex subunit CarC (379 aa).

Residues 122–131 (FALTEPGAGS) and 155–157 (FIT) contribute to the FAD site. Ser-131 is a binding site for substrate. Position 239–242 (239–242 (DVGR)) interacts with substrate. FAD contacts are provided by residues Arg-267, Gln-278, and 335–339 (QIHGG). Residue Glu-362 is the Proton acceptor of the active site. Residue Gly-363 coordinates substrate. 364–366 (TSQ) lines the FAD pocket.

The protein belongs to the acyl-CoA dehydrogenase family. Part of the homotrimeric caffeyl-CoA reductase-Etf complex composed of (R)-2-hydroxyisocaproyl-CoA dehydratase CarC, and the electron transfer flavoprotein (ETF) alpha (CarE) and beta (CarD) subunits. FAD serves as cofactor.

It localises to the cytoplasm. The enzyme catalyses hydrocaffeoyl-CoA + 2 reduced [2Fe-2S]-[ferredoxin] + 2 NAD(+) = (E)-caffeoyl-CoA + 2 oxidized [2Fe-2S]-[ferredoxin] + 2 NADH. In terms of biological role, the Caffeyl-CoA reductase-Etf complex catalyzes the reduction of caffeyl-CoA to yield hydrocaffeyl-CoA. It couples the endergonic ferredoxin reduction with NADH as reductant to the exergonic reduction of caffeoyl-CoA with the same reductant. It uses the mechanism of electron bifurcation to overcome the steep energy barrier in ferredoxin reduction. Also reduces 4-coumaroyl-CoA and feruloyl-CoA. The chain is Caffeyl-CoA reductase-Etf complex subunit CarC from Acetobacterium woodii (strain ATCC 29683 / DSM 1030 / JCM 2381 / KCTC 1655 / WB1).